The primary structure comprises 341 residues: Flagellar P-ring protein (341 aa).

An N-terminal signal peptide occupies residues 1–19; that stretch reads MKQVFLWLIFVLAFHKLLA.

Belongs to the FlgI family. As to quaternary structure, the basal body constitutes a major portion of the flagellar organelle and consists of four rings (L,P,S, and M) mounted on a central rod.

It is found in the periplasm. It localises to the bacterial flagellum basal body. In terms of biological role, assembles around the rod to form the L-ring and probably protects the motor/basal body from shearing forces during rotation. The sequence is that of Flagellar P-ring protein from Helicobacter acinonychis (strain Sheeba).